Here is a 465-residue protein sequence, read N- to C-terminus: Serine/threonine-protein kinase 38 (465 aa).

Residue A2 is modified to N-acetylalanine. The interval 62-87 is interaction with S100B; the sequence is KRLRRSAHARKETEFLRLKRTRLGLE. Residue T74 is modified to Phosphothreonine. The 294-residue stretch at 89-382 folds into the Protein kinase domain; that stretch reads FESLKVIGRG…VEEIKNNSFF (294 aa). Residues 95-103 and K118 each bind ATP; that span reads IGRGAFGEV. The active-site Proton acceptor is D212. S264 is subject to Phosphoserine. Phosphoserine; by autocatalysis is present on S281. The short motif at 306–311 is the UFM1-interacting motif (UFIM) element; sequence WSLGVI. An AGC-kinase C-terminal domain is found at 383–455; sequence EGVDWEHIRE…KRFEGLTARG (73 aa). Residue T444 is modified to Phosphothreonine; by STK24/MST3.

Belongs to the protein kinase superfamily. AGC Ser/Thr protein kinase family. As to quaternary structure, homodimeric S100B binds two molecules of STK38. Interacts with MOB1 and MOB2. Interacts with MAP3K1 and MAP3K2 (via the kinase domain). Forms a tripartite complex with MOBKL1B and STK3/MST2. Interacts with MICAL1; leading to inhibit the protein kinase activity by antagonizing activation by MST1/STK4. Requires Mg(2+) as cofactor. ISGylated. In terms of processing, phosphorylated by STK3/MST2 and this is enhanced by MOBKL1B.

The protein resides in the nucleus. It localises to the cytoplasm. The protein localises to the chromosome. The enzyme catalyses L-seryl-[protein] + ATP = O-phospho-L-seryl-[protein] + ADP + H(+). It carries out the reaction L-threonyl-[protein] + ATP = O-phospho-L-threonyl-[protein] + ADP + H(+). With respect to regulation, activated by binding of S100B which releases autoinhibitory N-lobe interactions, enabling ATP to bind and the autophosphorylation of Ser-281. Thr-444 then undergoes calcium-dependent phosphorylation by STK24/MST3. Interactions between phosphorylated Thr-444 and the N-lobe promote additional structural changes that complete the activation of the kinase. Autoinhibition is also released by the binding of MOB1/MOBKL1A and MOB2/HCCA2 to the N-terminal of STK38. Serine/threonine-protein kinase that acts as a negative regulator of MAP3K1/2 signaling. Converts MAP3K2 from its phosphorylated form to its non-phosphorylated form and inhibits autophosphorylation of MAP3K2. Acts as an ufmylation 'reader' in a kinase-independent manner: specifically recognizes and binds mono-ufmylated histone H4 in response to DNA damage, promoting the recruitment of SUV39H1 to the double-strand breaks, resulting in ATM activation. The polypeptide is Serine/threonine-protein kinase 38 (STK38) (Bos taurus (Bovine)).